Consider the following 691-residue polypeptide: Threonine--tRNA ligase (691 aa).

A TGS domain is found at Met-1–Pro-69. Residues Asp-268 to Pro-574 form a catalytic region. Cys-373, His-424, and His-551 together coordinate Zn(2+).

This sequence belongs to the class-II aminoacyl-tRNA synthetase family. Homodimer. Requires Zn(2+) as cofactor.

It localises to the cytoplasm. The enzyme catalyses tRNA(Thr) + L-threonine + ATP = L-threonyl-tRNA(Thr) + AMP + diphosphate + H(+). Functionally, catalyzes the attachment of threonine to tRNA(Thr) in a two-step reaction: L-threonine is first activated by ATP to form Thr-AMP and then transferred to the acceptor end of tRNA(Thr). Also edits incorrectly charged L-seryl-tRNA(Thr). The polypeptide is Threonine--tRNA ligase (Corynebacterium jeikeium (strain K411)).